The following is a 636-amino-acid chain: uncharacterized protein (636 aa).

Disordered stretches follow at residues 1–22 (MYNV…NEIG) and 81–107 (SSQT…PQNN). Residues 1 to 170 (MYNVRGDLNR…YFVGGEGLMQ (170 aa)) lie on the Cytoplasmic side of the membrane. Residues 171-191 (LLFLLFLAAGTGMLFIGLPIL) form a helical; Signal-anchor for type II membrane protein membrane-spanning segment. The Lumenal portion of the chain corresponds to 192–636 (TYTGHNSLAS…RPKNSLMDGC (445 aa)). A GH16 domain is found at 218-587 (LRYGSLIDPD…YVRIYQDSSD (370 aa)). Asn-291, Asn-378, Asn-429, Asn-464, Asn-489, and Asn-616 each carry an N-linked (GlcNAc...) asparagine glycan.

The protein belongs to the SKN1/KRE6 family.

It localises to the endoplasmic reticulum membrane. In terms of biological role, required for synthesis of the major beta-glucans of the yeast cell wall. This is an uncharacterized protein from Schizosaccharomyces pombe (strain 972 / ATCC 24843) (Fission yeast).